Consider the following 71-residue polypeptide: Brevinin-1HN1 (71 aa).

Residues 1–22 form the signal peptide; sequence MFTSKKPLLLLFFLGTINLSLC. Residues 23-45 constitute a propeptide that is removed on maturation; sequence EQERDADEEERRDDPDERDVEVE. An intrachain disulfide couples cysteine 65 to cysteine 71.

In terms of tissue distribution, expressed by the skin glands.

The protein localises to the secreted. Its function is as follows. Has antimicrobial activity against Gram-positive bacteria and fungi but has weak or no activity against a range of Gram-negative bacteria except P.faecalis. Active against the Gram-positive bacteria E.faecium 091299 (MIC=19 uM), E.faecalis 981 (MIC=19 uM), S.aureus ATCC 25923 (MIC=1.2 uM), S.carnosus KHS (MIC=4.8 uM), B.licheniformis X39 (MIC=2.4 uM) and R.rhodochrous X15 (MIC=1.2 uM). Active against the Gram-negative bacterium P.faecalis X29 (MIC=4.8 uM), is virtually inactive against E.coli ATCC 25922 (MIC=150 uM) and inactive against P.aeruginosa and S.typhi. Has antifungal activity against C.albicans ATCC 2002 (MIC=2.4 uM) and is also active against the slime mold 090223 (MIC=1.2 uM). Has low hemolytic activity against human erythrocytes (LC(50)=75 uM). In Odorrana hainanensis (Odor frog), this protein is Brevinin-1HN1.